The following is a 224-amino-acid chain: Phosphoribosylformylglycinamidine synthase subunit PurQ (224 aa).

Residues 2 to 224 (KIAVIVFPGS…SLLEEGKVKG (223 aa)) form the Glutamine amidotransferase type-1 domain. The active-site Nucleophile is the Cys-86. Active-site residues include His-195 and Glu-197.

Part of the FGAM synthase complex composed of 1 PurL, 1 PurQ and 2 PurS subunits.

It localises to the cytoplasm. It carries out the reaction N(2)-formyl-N(1)-(5-phospho-beta-D-ribosyl)glycinamide + L-glutamine + ATP + H2O = 2-formamido-N(1)-(5-O-phospho-beta-D-ribosyl)acetamidine + L-glutamate + ADP + phosphate + H(+). The enzyme catalyses L-glutamine + H2O = L-glutamate + NH4(+). Its pathway is purine metabolism; IMP biosynthesis via de novo pathway; 5-amino-1-(5-phospho-D-ribosyl)imidazole from N(2)-formyl-N(1)-(5-phospho-D-ribosyl)glycinamide: step 1/2. Its function is as follows. Part of the phosphoribosylformylglycinamidine synthase complex involved in the purines biosynthetic pathway. Catalyzes the ATP-dependent conversion of formylglycinamide ribonucleotide (FGAR) and glutamine to yield formylglycinamidine ribonucleotide (FGAM) and glutamate. The FGAM synthase complex is composed of three subunits. PurQ produces an ammonia molecule by converting glutamine to glutamate. PurL transfers the ammonia molecule to FGAR to form FGAM in an ATP-dependent manner. PurS interacts with PurQ and PurL and is thought to assist in the transfer of the ammonia molecule from PurQ to PurL. The chain is Phosphoribosylformylglycinamidine synthase subunit PurQ from Ligilactobacillus salivarius (strain UCC118) (Lactobacillus salivarius).